The following is a 361-amino-acid chain: S-adenosylmethionine:tRNA ribosyltransferase-isomerase (361 aa).

Belongs to the QueA family. As to quaternary structure, monomer.

The protein resides in the cytoplasm. The catalysed reaction is 7-aminomethyl-7-carbaguanosine(34) in tRNA + S-adenosyl-L-methionine = epoxyqueuosine(34) in tRNA + adenine + L-methionine + 2 H(+). The protein operates within tRNA modification; tRNA-queuosine biosynthesis. In terms of biological role, transfers and isomerizes the ribose moiety from AdoMet to the 7-aminomethyl group of 7-deazaguanine (preQ1-tRNA) to give epoxyqueuosine (oQ-tRNA). The polypeptide is S-adenosylmethionine:tRNA ribosyltransferase-isomerase (Methylocella silvestris (strain DSM 15510 / CIP 108128 / LMG 27833 / NCIMB 13906 / BL2)).